The following is a 266-amino-acid chain: Putative transmembrane ascorbate-dependent reductase CYB561 homolog (266 aa).

Residues 1 to 22 (MSLLFDPGFVILREDQSVKLFN) are Cytoplasmic-facing. A helical membrane pass occupies residues 23 to 43 (IILVMSQVFGGLAVLLVTIWM). Residues 27–240 (MSQVFGGLAV…YTVCVLLLVL (214 aa)) form the Cytochrome b561 domain. The Vesicular segment spans residues 44 to 61 (SKFESGFAWNEDPDKEFN). Residues 62–82 (YHPTFMIMGMVFLFGEALLVY) traverse the membrane as a helical segment. Heme b-binding residues include His63, Arg83, and Lys90. Topologically, residues 83-95 (RVFRNERKKFSKT) are cytoplasmic. Positions 90 and 94 each coordinate L-ascorbate. A helical transmembrane segment spans residues 96–116 (LHVILHSCVLVFMLMALKAVF). Residues His97, 134–137 (NLVS), and His139 contribute to the heme b site. The Vesicular portion of the chain corresponds to 117 to 141 (DYHNLHKDPSGNPAPIVNLVSLHSW). A helical transmembrane segment spans residues 142–162 (IGLSVVILYFAQYIVGFITYF). The Cytoplasmic segment spans residues 163-176 (FPGMPIPIRQLVMP). Residue Arg171 participates in L-ascorbate binding. The helical transmembrane segment at 177–197 (FHQMFGVLIFIFVSITVAMGI) threads the bilayer. Heme b-binding residues include His178 and Glu199. Residues 198 to 219 (SERAAWKHTCWTKEGQMCAQQA) lie on the Vesicular side of the membrane. A helical transmembrane segment spans residues 220-240 (TSSFVGVFTFLYTVCVLLLVL). The Cytoplasmic segment spans residues 241–266 (NPRWKRQSLPEEEGLHHLTSSHSMSD). Lys245 is a binding site for heme b.

Heme b serves as cofactor.

The protein resides in the membrane. It carries out the reaction monodehydro-L-ascorbate radical(out) + L-ascorbate(in) = monodehydro-L-ascorbate radical(in) + L-ascorbate(out). In terms of biological role, putative transmembrane reductase that uses ascorbate as an electron donor in the cytoplasm and transfers electrons across membranes to reduce monodehydro-L-ascorbate radical in the lumen of secretory vesicles. This chain is Putative transmembrane ascorbate-dependent reductase CYB561 homolog, found in Caenorhabditis elegans.